A 577-amino-acid polypeptide reads, in one-letter code: Signal peptide peptidase-like 2B (577 aa).

An N-terminal signal peptide occupies residues 1–19; the sequence is MAAARLAASLLLLAAQVAC. The Lumenal segment spans residues 20 to 168; it reads EFGVLRVVPQ…APSEPVMDYN (149 aa). The PA domain maps to 49 to 149; that stretch reads LPHDLNKVSL…RDLQDIFRRF (101 aa). Asn91 carries an N-linked (GlcNAc...) asparagine glycan. Residues 169–189 traverse the membrane as a helical segment; that stretch reads MVIIFIMAVGTVALGGYWAGS. The Cytoplasmic portion of the chain corresponds to 190–216; that stretch reads HDVKKYMKHKRDDVPEKQEDEAVDVTP. Residues 217-237 traverse the membrane as a helical segment; sequence VMICVFVVMCCFMLVLLYYFY. The Lumenal segment spans residues 238–239; sequence DR. A helical membrane pass occupies residues 240–260; sequence LVYVIIGIFCLASSTGLYSCL. Topologically, residues 261 to 286 are cytoplasmic; the sequence is APCVRKLPFCTCRVPDNNLPYFHKRP. The helical transmembrane segment at 287 to 307 threads the bilayer; that stretch reads QARMLLLALFCVTVSVVWGVF. Residues 308–312 lie on the Lumenal side of the membrane; that stretch reads RNEDQ. A helical transmembrane segment spans residues 313–333; the sequence is WAWVLQDTLGIAFCLYMLRTI. Over 334 to 341 the chain is Cytoplasmic; the sequence is RLPTFKAC. A helical transmembrane segment spans residues 342 to 362; sequence TLLLLVLFVYDIFFVFITPYL. Asp352 is a catalytic residue. Topologically, residues 363–405 are lumenal; it reads TKSGNSIMVEVATGPSNSSTHEKLPMVLKVPRLNTSPLSLCDR. A helical membrane pass occupies residues 406-426; it reads PFSLLGFGDILVPGLLVAYCH. Asp414 is a catalytic residue. Over 427-438 the chain is Cytoplasmic; it reads RFDIQVQSSRIY. The chain crosses the membrane as a helical span at residues 439–459; it reads FVACTIAYGLGLLVTFVALVL. Residues 460 to 463 lie on the Lumenal side of the membrane; that stretch reads MRHG. Residues 464–484 form a helical membrane-spanning segment; sequence QPALLYLVPCTLLTSCTVALW. The short motif at 465-467 is the PAL element; the sequence is PAL. Residues 485 to 577 are Cytoplasmic-facing; it reads RREMGAFWTG…IPVVTPGTSA (93 aa). The segment at 502 to 577 is disordered; that stretch reads QTPWAAPQGP…IPVVTPGTSA (76 aa).

The protein belongs to the peptidase A22B family. As to quaternary structure, monomer. Homodimer. Interacts with ITM2B and TNF. Post-translationally, glycosylated.

The protein localises to the cell membrane. It is found in the golgi apparatus membrane. Its subcellular location is the lysosome membrane. The protein resides in the endosome membrane. It localises to the membrane. Functionally, intramembrane-cleaving aspartic protease (I-CLiP) that cleaves type II membrane signal peptides in the hydrophobic plane of the membrane. Functions in ITM2B and TNF processing. Catalyzes the intramembrane cleavage of the anchored fragment of shed TNF-alpha (TNF), which promotes the release of the intracellular domain (ICD) for signaling to the nucleus. May play a role in the regulation of innate and adaptive immunity. The polypeptide is Signal peptide peptidase-like 2B (Rattus norvegicus (Rat)).